A 602-amino-acid chain; its full sequence is MSHESHHSEGMATSGEVHEIREEEPEIETMHIENSVEGESGRQRTESTASVNSESWQNSDEMMMNMRRAQSLLDQGASCFQIIQQVFPEFDASRFENMSERVHFKVLSDLLERAPTRQKLFTYNSLSDAVDLFRTRKNILVLTGAGVSVSCGIPDFRSKDGIYARLRSEFPNLPDPTAMFDIRYFRDNPAPFYNFAREIFPGQFTPSVSHRFIKQLESSGRLLRNYTQNIDTLEHQTGIKRVVECHGSFSKCTCTSCGNQTDGMEIREDVLAMKVARCKICHGVIKPNIVFFGEDLGREFHRHVTEDKDKVDLIVVIGSSLKVRPVALIPHCVDKNVPQILINRESLPHYNADIELLGNCDDIVRDICYALGGSFAEMIASYDACVERSPSTSRAKRQLITQQEFLNICAQERRDKTPVPEPESSEPSTKRPRMSTTEDMEGNQFQQIQKHTSSEDDDEDNTRNSDEVLREIKHPRLISITDMLNDKKCVAISAYQTVFPGAECSFDMETLKLVHDVPHRNRHESDSSCESCSTVPGSDKSEANPLSRSQSTDDIVYAEIRRKEVFLDLQRCDSCDNDLQYELSDPIDPETFAKRIADMCIE.

Positions 25–57 (PEIETMHIENSVEGESGRQRTESTASVNSESWQ) are disordered. Polar residues predominate over residues 46–57 (ESTASVNSESWQ). The region spanning 119-374 (KLFTYNSLSD…RDICYALGGS (256 aa)) is the Deacetylase sirtuin-type domain. NAD(+) contacts are provided by residues 144-163 (GAGVSVSCGIPDFRSKDGIY) and 228-231 (QNID). The active-site Proton acceptor is His246. Cys254, Cys257, Cys278, and Cys281 together coordinate Zn(2+). NAD(+) contacts are provided by residues 318–320 (GSS), 343–345 (NRE), and Cys360. Disordered regions lie at residues 411 to 468 (QERR…SDEV) and 520 to 551 (RNRHESDSSCESCSTVPGSDKSEANPLSRSQS).

This sequence belongs to the sirtuin family. Class I subfamily. In terms of assembly, interacts with ftt-2 and par-5. Interacts with daf-16 following heat-shock, which causes daf-16 to accumulate in the nucleus. Interaction with daf-16 is promoted by ftt-2. Zn(2+) serves as cofactor.

The protein resides in the nucleus. The enzyme catalyses N(6)-acetyl-L-lysyl-[protein] + NAD(+) + H2O = 2''-O-acetyl-ADP-D-ribose + nicotinamide + L-lysyl-[protein]. NAD-dependent deacetylase. Required for a reduction of the 'Lys-16' acetylation of histone H4 (H4K16ac) on dosage-compensated X chromosomes in hermaphrodites. Functions upstream of daf-16 in the insulin-like signaling pathway, promoting daf-16 mediated transcriptional activation and increased life-span. May also regulate life-span independently of daf-16 by modulating the transcription of genes involved in the stress response of the endoplasmic reticulum (ER). Acts upstream of the nicotinic acid metabolism pathway, which may be linked to the regulation of longevity. Plays a role in ascaroside-mediated longevity and stress resistance. This chain is NAD-dependent protein deacetylase sir-2.1 (sir-2.1), found in Caenorhabditis briggsae.